A 335-amino-acid polypeptide reads, in one-letter code: MKLGTPRWWYVKSGAPAPVTRALLTPLSWLWADTTRRRIARATPAIVGAPVICVGNVTMGGAGKTPIVRELLLTLTQRGVAAHGLSRGYGGKLKGPVRVDTIRHTAADVGDEPLMLAQDFPMWIAADRVAGAKAAVRAGASAIVMDDGHQNPSVKKALSLVVVDGETRGGEWPFGDGRVFPAGPMREPLKVGLSRADAVIVLLPVDVEQPDFDLLVAFGDMPVLVARLEAAAPVPKGPQVGFAGIAKPWKVEKALTAAGCQLVDFAPFPDHGAYSESTLKMLADRAEVYEAGLVTTEKDWVRLPPAWRERVTPWPVRARFEDPAALEALLKGIGL.

58-65 (TMGGAGKT) is an ATP binding site.

It belongs to the LpxK family.

The enzyme catalyses a lipid A disaccharide + ATP = a lipid IVA + ADP + H(+). Its pathway is glycolipid biosynthesis; lipid IV(A) biosynthesis; lipid IV(A) from (3R)-3-hydroxytetradecanoyl-[acyl-carrier-protein] and UDP-N-acetyl-alpha-D-glucosamine: step 6/6. Transfers the gamma-phosphate of ATP to the 4'-position of a tetraacyldisaccharide 1-phosphate intermediate (termed DS-1-P) to form tetraacyldisaccharide 1,4'-bis-phosphate (lipid IVA). In Caulobacter vibrioides (strain ATCC 19089 / CIP 103742 / CB 15) (Caulobacter crescentus), this protein is Tetraacyldisaccharide 4'-kinase.